We begin with the raw amino-acid sequence, 501 residues long: Cytochrome P450 2J1 (501 aa).

Residue Cys447 participates in heme binding.

The protein belongs to the cytochrome P450 family. The cofactor is heme. Small intestine.

The protein resides in the endoplasmic reticulum membrane. Its subcellular location is the microsome membrane. It catalyses the reaction an organic molecule + reduced [NADPH--hemoprotein reductase] + O2 = an alcohol + oxidized [NADPH--hemoprotein reductase] + H2O + H(+). Functionally, catalyzes the N-demethylation of benzphetamine to formaldehyde. The polypeptide is Cytochrome P450 2J1 (CYP2J1) (Oryctolagus cuniculus (Rabbit)).